Reading from the N-terminus, the 299-residue chain is ATP synthase gamma chain (299 aa).

This sequence belongs to the ATPase gamma chain family. F-type ATPases have 2 components, CF(1) - the catalytic core - and CF(0) - the membrane proton channel. CF(1) has five subunits: alpha(3), beta(3), gamma(1), delta(1), epsilon(1). CF(0) has three main subunits: a, b and c.

Its subcellular location is the cell membrane. Produces ATP from ADP in the presence of a proton gradient across the membrane. The gamma chain is believed to be important in regulating ATPase activity and the flow of protons through the CF(0) complex. This chain is ATP synthase gamma chain, found in Clavibacter michiganensis subsp. michiganensis (strain NCPPB 382).